The chain runs to 1048 residues: Anguibactin system regulator (1048 aa).

Residues 965-1039 (PIITASEDRV…AFAIIMDRCR (75 aa)) enclose the Carrier domain.

Belongs to the ATP-dependent AMP-binding enzyme family.

The protein operates within siderophore biosynthesis; anguibactin biosynthesis. Bifunctional protein that plays an essential role in virulence. Plays a role in both the production of the siderophore anguibactin and the regulation of iron transport genes. The chain is Anguibactin system regulator (angR) from Vibrio anguillarum (Listonella anguillarum).